We begin with the raw amino-acid sequence, 360 residues long: MAALSLKGVKKSYGGAQYVLHGIDVDIADGEFVVLVGPSGCGKSTLLRMIAGLETVTEGEIAIGGRIVNALEPKDRDIAMVFQNYALYPHMTVAQNMGYGLKIRGVERALIDARVQAAAQILELGPLLARRPRELSGGQRQRVAMGRAIVREPSVFLFDEPLSNLDAKLRVQMRLEIQRLHARLATTSVYVTHDQIEAMTLAQRVIVMNRGDAEQIGAPVDVYEKPATTFVASFIGSPAMNLLHGRLSEDGAAFDVADGPRLPVAGAAGAGRGIAPGREWILGVRPEHMTPQPGEAFATLAVDSCELLGADNLAHGRWGAHDVAVRLPHAMRPTRGETLPVALPARHLHFFDPATGKRAG.

The 232-residue stretch at Leu-4 to Ile-235 folds into the ABC transporter domain. Gly-37–Ser-44 is an ATP binding site.

Belongs to the ABC transporter superfamily. sn-glycerol-3-phosphate importer (TC 3.A.1.1.3) family. In terms of assembly, the complex is composed of two ATP-binding proteins (UgpC), two transmembrane proteins (UgpA and UgpE) and a solute-binding protein (UgpB).

It is found in the cell inner membrane. It catalyses the reaction sn-glycerol 3-phosphate(out) + ATP + H2O = sn-glycerol 3-phosphate(in) + ADP + phosphate + H(+). Part of the ABC transporter complex UgpBAEC involved in sn-glycerol-3-phosphate (G3P) import. Responsible for energy coupling to the transport system. The polypeptide is sn-glycerol-3-phosphate import ATP-binding protein UgpC (Burkholderia mallei (strain ATCC 23344)).